The chain runs to 136 residues: Secreted RxLR effector protein 15 (136 aa).

The N-terminal stretch at 1 to 22 (MRGHSALMMAVVTLAAVSSGAA) is a signal peptide. A RxLR motif is present at residues 47–50 (RLLR).

It belongs to the RxLR effector family.

Its subcellular location is the secreted. The protein resides in the host nucleus. The protein localises to the host cytoplasm. Functionally, effector that completely suppresses the host cell death induced by cell death-inducing proteins. The polypeptide is Secreted RxLR effector protein 15 (Plasmopara viticola (Downy mildew of grapevine)).